The primary structure comprises 78 residues: U-scoloptoxin(15)-Ssm2a (78 aa).

Residues 1–23 form the signal peptide; sequence MEKKIIFLCFFVSLLTLPEFISS. The segment at 34–37 is important for inhibition of KCNQ4; it reads PEKK. 2 cysteine pairs are disulfide-bonded: Cys44/Cys70 and Cys48/Cys72.

It belongs to the SLPTX(15) family. Expressed by the venom gland.

The protein resides in the secreted. The protein is U-scoloptoxin(15)-Ssm2a of Scolopendra mutilans (Chinese red-headed centipede).